Reading from the N-terminus, the 901-residue chain is Alpha-actinin-3 (901 aa).

Met-1 is subject to N-acetylmethionine. Residues 1–261 form an actin-binding region; the sequence is MMMVMQPEGL…IMTYVSCFYH (261 aa). 2 Calponin-homology (CH) domains span residues 45-149 and 158-264; these read KQQR…LRFA and TSAK…HAFA. Spectrin repeat units follow at residues 288–398, 408–513, 523–634, and 644–747; these read KLME…WLLS, HLAE…ALER, RLQL…TLQE, and RLRR…EVEN. EF-hand domains follow at residues 760–795 and 796–831; these read EQLN…MGYD and LGEV…ETAE. Ca(2+) contacts are provided by Asp-773, Asn-777, Met-779, Asp-784, Asp-809, and Asn-811.

It belongs to the alpha-actinin family. In terms of assembly, homodimer; antiparallel. Also forms heterodimers with ACTN2. Interacts with MYOZ1. In terms of tissue distribution, expression restricted to fast (type 2) skeletal muscle fibers (at protein level).

Its function is as follows. F-actin cross-linking protein which is thought to anchor actin to a variety of intracellular structures. This is a bundling protein. In Homo sapiens (Human), this protein is Alpha-actinin-3 (ACTN3).